The chain runs to 315 residues: MAIQIVLIVGPTATGKSRLAVDVAKRFNGEVVSADSMQIYKYMDIGTAKITKEEMQGIPHHMIDIVEPNEEFSVAEYEKRAKAIIKDIHERGKLPIIVGGTGLYINSIVYIMHFSDFEGSKEFREKMKKLAETYGTSYLYEKLKEVDPEAARKIHPNDLRRIIRALEVYEFTGKPISHYQKMSGMRKNPEYDPIMIGLNYKNRQLLYEKINRRVDEMIKNNLVEEVVNLLKIGYNKYGTSMQALGYKEIVEYLNGEISLEEAVEKIKKGTRRYAKRQITWFKAYDFIKWFFVDDYKTYEELRENIFEYLAGKLKF.

10-17 (GPTATGKS) is a binding site for ATP. Residue 12–17 (TATGKS) participates in substrate binding. Residues 35–38 (DSMQ) form an interaction with substrate tRNA region.

Belongs to the IPP transferase family. Monomer. Mg(2+) serves as cofactor.

It carries out the reaction adenosine(37) in tRNA + dimethylallyl diphosphate = N(6)-dimethylallyladenosine(37) in tRNA + diphosphate. Functionally, catalyzes the transfer of a dimethylallyl group onto the adenine at position 37 in tRNAs that read codons beginning with uridine, leading to the formation of N6-(dimethylallyl)adenosine (i(6)A). This chain is tRNA dimethylallyltransferase, found in Caldanaerobacter subterraneus subsp. tengcongensis (strain DSM 15242 / JCM 11007 / NBRC 100824 / MB4) (Thermoanaerobacter tengcongensis).